We begin with the raw amino-acid sequence, 43 residues long: Protein PsbN (43 aa).

Residues 7–27 (IAIFISGLLVSFTGYALYTAF) traverse the membrane as a helical segment.

Belongs to the PsbN family.

The protein localises to the plastid. Its subcellular location is the chloroplast thylakoid membrane. May play a role in photosystem I and II biogenesis. In Suaeda maritima (Annual sea blite), this protein is Protein PsbN.